We begin with the raw amino-acid sequence, 179 residues long: RNA pyrophosphohydrolase (179 aa).

In terms of domain architecture, Nudix hydrolase spans 6 to 149 (GYRANVGIVI…KKPIYEDMLK (144 aa)). A Nudix box motif is present at residues 38–59 (GGIDFGESELDALFRELNEEIG).

It belongs to the Nudix hydrolase family. RppH subfamily. It depends on a divalent metal cation as a cofactor.

Functionally, accelerates the degradation of transcripts by removing pyrophosphate from the 5'-end of triphosphorylated RNA, leading to a more labile monophosphorylated state that can stimulate subsequent ribonuclease cleavage. The protein is RNA pyrophosphohydrolase of Ruthia magnifica subsp. Calyptogena magnifica.